Consider the following 32-residue polypeptide: MSDIN-like toxin proprotein 3 (32 aa).

A propeptide spanning residues 1-10 (MSDINATRLP) is cleaved from the precursor. The segment at residues 11–17 (SFFFPIP) is a cross-link (cyclopeptide (Ser-Pro)). The propeptide occupies 18 to 32 (CISDDIEMVLTRGER).

Belongs to the MSDIN fungal toxin family. In terms of processing, processed by the macrocyclase-peptidase enzyme POPB to yield a toxic cyclic heptapeptide. POPB first removes 10 residues from the N-terminus. Conformational trapping of the remaining peptide forces the enzyme to release this intermediate rather than proceed to macrocyclization. The enzyme rebinds the remaining peptide in a different conformation and catalyzes macrocyclization of the N-terminal 8 residues.

Functionally, probable toxin that belongs to the MSDIN-like toxin family responsible for a large number of food poisoning cases and deaths. This chain is MSDIN-like toxin proprotein 3, found in Amanita phalloides (Death cap).